The primary structure comprises 304 residues: Vacuolar protein sorting-associated protein 26C (304 aa).

This sequence belongs to the VPS26 family. As to quaternary structure, component of the commander complex that is essential for endosomal recycling of transmembrane cargos; the commander complex is composed of the CCC subcomplex and the retriever subcomplex. Component of the heterotrimeric retriever complex consisting of vps26c, vps29 and vps35l; within the complex interacts with vps35l. Interacts with snx17 (via C-terminus); the interaction is direct and associates snx17 with the retriever complex. Interacts with snx31; the interaction is direct.

It localises to the endosome. In terms of biological role, component of the commander complex that is essential for endosomal recycling of transmembrane cargos; the commander complex is composed of the CCC subcomplex and the retriever subcomplex. Component of the retriever complex, which is a heterotrimeric complex related to retromer cargo-selective complex (CSC) and essential for retromer-independent retrieval and recycling of numerous cargos such as integrin alpha-5/beta-1 (ITGA5:ITGB1). The recruitment of the retriever complex to the endosomal membrane involves CCC and WASH complexes. In the endosomes, drives the retriever and recycling of NxxY-motif-containing cargo proteins by coupling to snx17, a cargo essential for the homeostatic maintenance of numerous cell surface proteins associated with processes that include cell migration, cell adhesion, nutrient supply and cell signaling. In Dictyostelium discoideum (Social amoeba), this protein is Vacuolar protein sorting-associated protein 26C (vps26c).